Here is a 477-residue protein sequence, read N- to C-terminus: Asparaginyl-tRNA synthetase (477 aa).

The N-terminal 14 residues, 1–14 (MLGVRCLLRSVRFC), are a transit peptide targeting the mitochondrion. At Lys-353 the chain carries N6-acetyllysine.

This sequence belongs to the class-II aminoacyl-tRNA synthetase family. In terms of assembly, homodimer.

Its subcellular location is the mitochondrion matrix. It is found in the mitochondrion. It catalyses the reaction tRNA(Asn) + L-asparagine + ATP = L-asparaginyl-tRNA(Asn) + AMP + diphosphate + H(+). Functionally, mitochondrial aminoacyl-tRNA synthetase that catalyzes the specific attachment of the asparagine amino acid (aa) to the homologous transfer RNA (tRNA), further participating in protein synthesis. The reaction occurs in a two steps: asparagine is first activated by ATP to form Asn-AMP and then transferred to the acceptor end of tRNA(Asn). This is Asparaginyl-tRNA synthetase from Homo sapiens (Human).